Here is a 305-residue protein sequence, read N- to C-terminus: UDP-3-O-acyl-N-acetylglucosamine deacetylase (305 aa).

The Zn(2+) site is built by His79, His238, and Asp242. His265 acts as the Proton donor in catalysis.

This sequence belongs to the LpxC family. Requires Zn(2+) as cofactor.

It catalyses the reaction a UDP-3-O-[(3R)-3-hydroxyacyl]-N-acetyl-alpha-D-glucosamine + H2O = a UDP-3-O-[(3R)-3-hydroxyacyl]-alpha-D-glucosamine + acetate. It functions in the pathway glycolipid biosynthesis; lipid IV(A) biosynthesis; lipid IV(A) from (3R)-3-hydroxytetradecanoyl-[acyl-carrier-protein] and UDP-N-acetyl-alpha-D-glucosamine: step 2/6. Functionally, catalyzes the hydrolysis of UDP-3-O-myristoyl-N-acetylglucosamine to form UDP-3-O-myristoylglucosamine and acetate, the committed step in lipid A biosynthesis. The chain is UDP-3-O-acyl-N-acetylglucosamine deacetylase from Salmonella arizonae (strain ATCC BAA-731 / CDC346-86 / RSK2980).